The chain runs to 120 residues: Ribosome-binding factor A (120 aa).

Belongs to the RbfA family. In terms of assembly, monomer. Binds 30S ribosomal subunits, but not 50S ribosomal subunits or 70S ribosomes.

Its subcellular location is the cytoplasm. One of several proteins that assist in the late maturation steps of the functional core of the 30S ribosomal subunit. Associates with free 30S ribosomal subunits (but not with 30S subunits that are part of 70S ribosomes or polysomes). Required for efficient processing of 16S rRNA. May interact with the 5'-terminal helix region of 16S rRNA. This chain is Ribosome-binding factor A, found in Lactobacillus delbrueckii subsp. bulgaricus (strain ATCC 11842 / DSM 20081 / BCRC 10696 / JCM 1002 / NBRC 13953 / NCIMB 11778 / NCTC 12712 / WDCM 00102 / Lb 14).